We begin with the raw amino-acid sequence, 290 residues long: NAD kinase (290 aa).

Residue D72 is the Proton acceptor of the active site. Residues 72–73 (DG), K77, 145–146 (NE), D175, 186–191 (TAYSLS), and A210 contribute to the NAD(+) site.

Belongs to the NAD kinase family. The cofactor is a divalent metal cation.

The protein resides in the cytoplasm. It carries out the reaction NAD(+) + ATP = ADP + NADP(+) + H(+). Functionally, involved in the regulation of the intracellular balance of NAD and NADP, and is a key enzyme in the biosynthesis of NADP. Catalyzes specifically the phosphorylation on 2'-hydroxyl of the adenosine moiety of NAD to yield NADP. The polypeptide is NAD kinase (Bacteroides fragilis (strain YCH46)).